A 1175-amino-acid chain; its full sequence is MRFSRIPPIFANVVRQTHYRNYANGVIKPREFNKVMVANRGEIAIRVFRALTELNKTSVAIYAEQDKNSMHRLKADEAYLVGKGLPPVAAYLTIDQIIETALKHNIDAIHPGYGFLSERSDFAAACQNAGIVFIGPSPDVMARMGDKVAARQAAIEAGVQVVPGTPGPITTADEAVEFAKQYGTPIILKAAYGGGGRGIRRVDKLEEVEEAFRRSYSEAQAAFGDGSLFVEKFVERPRHIEVQLLGDHHGNIVHLYERDCSVQRRHQKVVEIAPAPALPEGVREKILADALRLARHVGYQNAGTVEFLVDQKGNYYFIEVNARLQVEHTVTEEITGVDLVQAQIRIAEGKSLDDLKLSQETIQTTGSAIQCRVTTEDPAKGFQPDSGRIEVFRSGEGMGIRLDSASAFAGSVISPHYDSLMVKVIASARNHPNAAAKMIRALKKFRIRGVKTNIPFLLNVLRQPSFLDASVDTYFIDEHPELFQFKPSQNRAQKLLNYLGEVKVNGPTTPLATDLKPAVVSPPIPYIPAGAKPPTGLRDVLVQRGPTEFAKEVRSRPGCMITDTTFRDAHQSLLATRVRTYDMAAISPFVAQSFNGLFSLENWGGATFDVSMRFLHECPWERLQTLRKLIPNIPFQCLLRGANAMGYSNYPDNVIYKFCELAVKNGMDVFRVFDSLNYLPNLLVGMEAVGKAGGVVEAAIAYTGDVTDKSRDKYDLKYYLNLADQLVKAQAHILSIKDMAGVLKPEAAKLLIGALRDKFPDIPIHVHTHDTSGAGVAAMLECAKAGADVVDAAVDSMSGMTSQPSMGAIVASLQGTKHDTGLSLDDISKYSAYWESTRQLYAPFECATTMKSGNADVYKHEIPGGQYTNLQFQAFSLGLGPQFDEVKRMYREANLVLGDIIKVTPSSKIVGDLAQFMVQNNLTRETLVDRADDLSFPKSVVDFMQGNVGQPPYGFPEPLRTKVLRGKPKVDGRPGENAKPVDLDAVKVELEEKHGRTLSEEDVMSYSMFPTVFDEFETFRQQYGPVDKLPTRLFLTGLEIAEEVDVEIESGKTLAIQLLAEGKLNKRGEREVFFDLNGQMRSIFVVDKEASKEIVTRPRALPGVRGHIGAPMPGDVLELKIKEGDKVTKKQPLFVLSAMKMEMVIDSPIAGTVKAIHAPQGTKCSAGDLVVEVEP.

Residues glutamate 31–glutamate 481 form the Biotin carboxylation domain. Residues lysine 147, glutamate 231, and histidine 266 each coordinate ATP. In terms of domain architecture, ATP-grasp spans arginine 151–glutamate 348. Residue arginine 323 is part of the active site. In terms of domain architecture, Pyruvate carboxyltransferase spans cysteine 559 to serine 828. Residues arginine 567–glutamine 571 and arginine 640 contribute to the substrate site. A divalent metal cation is bound at residue aspartate 568. A divalent metal cation-binding residues include lysine 737, histidine 767, and histidine 769. Lysine 737 carries the post-translational modification N6-carboxylysine. A substrate-binding site is contributed by threonine 904. A Biotinyl-binding domain is found at arginine 1099 to glutamate 1174. At lysine 1140 the chain carries N6-biotinyllysine.

In terms of assembly, interacts with sir-2.2 and sir-2.3. Biotin serves as cofactor. Requires Zn(2+) as cofactor.

It is found in the cytoplasm. It catalyses the reaction hydrogencarbonate + pyruvate + ATP = oxaloacetate + ADP + phosphate + H(+). The protein operates within carbohydrate biosynthesis; gluconeogenesis. In terms of biological role, pyruvate carboxylase catalyzes a 2-step reaction, involving the ATP-dependent carboxylation of the covalently attached biotin in the first step and the transfer of the carboxyl group to pyruvate in the second. The chain is Pyruvate carboxylase 1 from Caenorhabditis elegans.